Consider the following 984-residue polypeptide: MRTAYFIFVGALLGVSYAKHHHAARAPIINLQGAEELVAVVREDENIISTVPDFAILSETGPVCNYLLTSQNNEPVPFDIQVVDKYTGAAVLRVKDAATLDCKKPEYNLQVQAVKCDNDNVKSEGVSLKIRVKDTNNHAPEIENPWYTFHVEEGKVVEEVGVLKASDKDCGHPNGEICEYEITNGLKELPFAINNHGVLRTTQPLNFTQSKSYILTVVAIDCAMRKSKSSLVTVHVDEKCVQGITAMNERVNYAPGVGSKLLLPDVSLEFCEKETICEPKSVQSVIELRAGHVTQGCARDTVYDNQTIQSCGLSTATVKLLNEEALTSSAENQILADQGIEFDGARGVTVSDENHQGLIPDHFTLSFSMKHAAGTKDEQSNKQNILCESDDFNMNRHHFSVYIRHCKLEVVLRREAGATSDFRAAEWRWSMPEVCDNEWHSYSLLFNGIDDVNVIVDGKSFKADERNPEILDDWPLHKTKATKTKLVVGACWHGRQQKLAQFFRGQLSSLYLLSGAVESERAIKCAHTCPEQLQFTGVDELLESQSATFSPDQTSLTLKAETSKQIGQMLKRVAYVNTQEKPAPGHRVFLVETEVTCKQDDKKMKLPSSKGYVFVQQAAEPTLSISASSQLKSNQHMVKVGQAMVPDLTITISQNNADGELEDVTQSHKIDYCKMHLQPARDMDVEYFSSPASLIAALNIEFEHDKDGILLRGEESAQGYKEVLSKVHYFNTRPESYAKRVYTVQCAMLKGRVLSNQLFVTMTIDGVTTTTSTTTEAPAPAQPDPIQFNFNSGETALDSLELIERHFEPAFDQLGSSRLQNILEMDLPRPKALLSHHGYDVGQGAIAGGAVAVVVVVCVGFLLVLLVIGVLKMRDTPMPRRRRQKRQSDGGMHWDDSGMNITVNPLDDVEKNGGAIDEFSDEEEEEETDGESECSYRDEEDDVSEDEEDQTEVLPHLDANQRVVGGLEWDDEDAISTNARSYRV.

An N-terminal signal peptide occupies residues 1-18; sequence MRTAYFIFVGALLGVSYA. The Extracellular portion of the chain corresponds to 19 to 850; that stretch reads KHHHAARAPI…VGQGAIAGGA (832 aa). 2 Cadherin domains span residues 66–142 and 143–257; these read YLLT…APEI and ENPW…APGV. 2 N-linked (GlcNAc...) asparagine glycosylation sites follow: Asn-206 and Asn-305. The chain crosses the membrane as a helical span at residues 851–871; sequence VAVVVVVCVGFLLVLLVIGVL. The Cytoplasmic portion of the chain corresponds to 872–984; it reads KMRDTPMPRR…ISTNARSYRV (113 aa). The disordered stretch occupies residues 878–959; the sequence is MPRRRRQKRQ…QTEVLPHLDA (82 aa). The span at 886–896 shows a compositional bias: basic and acidic residues; it reads RQSDGGMHWDD. Residues 918–951 are compositionally biased toward acidic residues; that stretch reads EFSDEEEEEETDGESECSYRDEEDDVSEDEEDQT.

This sequence belongs to the calsyntenin family. Interacts with isoform c of daf-2 (daf-2c); promoting daf-2c localization to synaptic regions. Interacts with klc-2. Interacts with unc-104. In terms of processing, a proportion of the protein is proteolytically cleaved before the transmembrane domain in neurons, leading to release in the extracellular space. Widely expressed in the nervous system. Highly expressed in many head neurons, including most amphid sensory neurons. Also expressed in other tissues, such as intestine and gonadal sheath cells.

The protein resides in the golgi apparatus membrane. It localises to the perikaryon. The protein localises to the cell projection. It is found in the axon. Its subcellular location is the secreted. The protein resides in the synaptic cleft. Functionally, cell adhesion molecule involved in associative learning and memory. Acts as a regulator of GABAergic synaptic transmission at neuromuscular junctions by regulating GABA synaptic vesicle precursor transport: possibly functions as a cargo adapter for unc-104-mediated transport of synaptic vesicle precursors. Promotes localization of isoform c of daf-2 (daf-2c) to synaptic regions by acting as a signaling adapter between klc-2 and daf-2c. Acts as aregulator of glutamate signaling in the sensory neurons by inhibiting the activity of command interneurons, thereby negatively regulating motor circuit activity and locomotion. The sequence is that of Calsyntenin-1 from Caenorhabditis elegans.